We begin with the raw amino-acid sequence, 105 residues long: Large ribosomal subunit protein bL21 (105 aa).

Belongs to the bacterial ribosomal protein bL21 family. Part of the 50S ribosomal subunit. Contacts protein L20.

Functionally, this protein binds to 23S rRNA in the presence of protein L20. The sequence is that of Large ribosomal subunit protein bL21 from Parafrankia sp. (strain EAN1pec).